The following is a 483-amino-acid chain: Bifunctional protein HldE (483 aa).

The ribokinase stretch occupies residues 1 to 327 (MDDALAHLPR…ACASSAQGEP (327 aa)). Position 201-204 (201-204 (NRKE)) interacts with ATP. Residue Asp-272 is part of the active site. The interval 354-483 (FTNGCFDLLH…TTNLIARMNS (130 aa)) is cytidylyltransferase.

In the N-terminal section; belongs to the carbohydrate kinase PfkB family. This sequence in the C-terminal section; belongs to the cytidylyltransferase family. Homodimer.

It carries out the reaction D-glycero-beta-D-manno-heptose 7-phosphate + ATP = D-glycero-beta-D-manno-heptose 1,7-bisphosphate + ADP + H(+). The catalysed reaction is D-glycero-beta-D-manno-heptose 1-phosphate + ATP + H(+) = ADP-D-glycero-beta-D-manno-heptose + diphosphate. It functions in the pathway nucleotide-sugar biosynthesis; ADP-L-glycero-beta-D-manno-heptose biosynthesis; ADP-L-glycero-beta-D-manno-heptose from D-glycero-beta-D-manno-heptose 7-phosphate: step 1/4. It participates in nucleotide-sugar biosynthesis; ADP-L-glycero-beta-D-manno-heptose biosynthesis; ADP-L-glycero-beta-D-manno-heptose from D-glycero-beta-D-manno-heptose 7-phosphate: step 3/4. In terms of biological role, catalyzes the phosphorylation of D-glycero-D-manno-heptose 7-phosphate at the C-1 position to selectively form D-glycero-beta-D-manno-heptose-1,7-bisphosphate. Functionally, catalyzes the ADP transfer from ATP to D-glycero-beta-D-manno-heptose 1-phosphate, yielding ADP-D-glycero-beta-D-manno-heptose. The polypeptide is Bifunctional protein HldE (Caulobacter vibrioides (strain ATCC 19089 / CIP 103742 / CB 15) (Caulobacter crescentus)).